The primary structure comprises 93 residues: uncharacterized protein (93 aa).

This is an uncharacterized protein from Enterobacter agglomerans (Erwinia herbicola).